The chain runs to 287 residues: MIADKLFEKVEKNGVVCVGLDTSLDYIPEEFKSKFSNESDMLFAFNKEIIDATLDVSACFKVQIAYYEALGLKGLESYKNTLSYLREKNALIIADIKRGDIAATAKMYAKAHFEGDFESDFITLNPYMGMDSIDPYLPYIEKNEKGVFVLVRTSNKGAEDIEYLEAGHGKKVYDVVGEKLNTLGKNYLGKHGYSSIGGVVGCTHQEEAKEMRDKLDTMPFLIPGYGAQGGTAKDVAAYLKNGNGGIVNSSRKILLAYKAMEDSKNFAECARKEAISMRDSIREAILK.

The Proton donor role is filled by lysine 97.

This sequence belongs to the OMP decarboxylase family. Type 2 subfamily.

It catalyses the reaction orotidine 5'-phosphate + H(+) = UMP + CO2. Its pathway is pyrimidine metabolism; UMP biosynthesis via de novo pathway; UMP from orotate: step 2/2. The chain is Orotidine 5'-phosphate decarboxylase from Clostridium perfringens (strain ATCC 13124 / DSM 756 / JCM 1290 / NCIMB 6125 / NCTC 8237 / Type A).